A 142-amino-acid chain; its full sequence is ATP synthase epsilon chain (142 aa).

This sequence belongs to the ATPase epsilon chain family. F-type ATPases have 2 components, CF(1) - the catalytic core - and CF(0) - the membrane proton channel. CF(1) has five subunits: alpha(3), beta(3), gamma(1), delta(1), epsilon(1). CF(0) has three main subunits: a, b and c.

The protein resides in the cell inner membrane. Produces ATP from ADP in the presence of a proton gradient across the membrane. The sequence is that of ATP synthase epsilon chain from Shewanella halifaxensis (strain HAW-EB4).